A 198-amino-acid polypeptide reads, in one-letter code: Methyl-coenzyme M reductase I operon protein C (198 aa).

In terms of assembly, MCR is composed of three subunits: alpha, beta, and gamma. The function of proteins C and D is not known.

The protein is Methyl-coenzyme M reductase I operon protein C (mcrC) of Methanothermobacter marburgensis (strain ATCC BAA-927 / DSM 2133 / JCM 14651 / NBRC 100331 / OCM 82 / Marburg) (Methanobacterium thermoautotrophicum).